The sequence spans 199 residues: Recombination protein RecR (199 aa).

A C4-type zinc finger spans residues 57 to 72 (CRSCRTFTEESHCPIC). One can recognise a Toprim domain in the interval 81-176 (EQICVVETPA…SVSRIAHGVP (96 aa)).

It belongs to the RecR family.

Functionally, may play a role in DNA repair. It seems to be involved in an RecBC-independent recombinational process of DNA repair. It may act with RecF and RecO. The chain is Recombination protein RecR from Shewanella sediminis (strain HAW-EB3).